A 154-amino-acid polypeptide reads, in one-letter code: Small ribosomal subunit protein uS15 (154 aa).

The segment covering 1 to 14 (MAPVPHRSRHKKGR) has biased composition (basic residues). Positions 1-24 (MAPVPHRSRHKKGRSGSVRPAHPT) are disordered.

The protein belongs to the universal ribosomal protein uS15 family. As to quaternary structure, part of the 30S ribosomal subunit.

The chain is Small ribosomal subunit protein uS15 from Pyrobaculum arsenaticum (strain DSM 13514 / JCM 11321 / PZ6).